Here is a 398-residue protein sequence, read N- to C-terminus: Protein-glutamate methylesterase/protein-glutamine glutaminase (398 aa).

The region spanning 4-121 (KVLVVDDSSF…ATNKDDAILL (118 aa)) is the Response regulatory domain. A 4-aspartylphosphate modification is found at Asp55. A disordered region spans residues 133–200 (RMYRSSSLTP…SANPTTSSIS (68 aa)). 2 stretches are compositionally biased toward polar residues: residues 136–146 (RSSSLTPTSTI) and 168–200 (RLASTTTPVATRSSLSTTSADRHSANPTTSSIS). Residues 205–398 (SGKQYKLLLI…EAILKESSRG (194 aa)) form the CheB-type methylesterase domain. Residues Ser217, His244, and Asp340 contribute to the active site.

This sequence belongs to the CheB family. Post-translationally, phosphorylated by CheA. Phosphorylation of the N-terminal regulatory domain activates the methylesterase activity.

It is found in the cytoplasm. The enzyme catalyses [protein]-L-glutamate 5-O-methyl ester + H2O = L-glutamyl-[protein] + methanol + H(+). It carries out the reaction L-glutaminyl-[protein] + H2O = L-glutamyl-[protein] + NH4(+). Involved in chemotaxis. Part of a chemotaxis signal transduction system that modulates chemotaxis in response to various stimuli. Catalyzes the demethylation of specific methylglutamate residues introduced into the chemoreceptors (methyl-accepting chemotaxis proteins or MCP) by CheR. Also mediates the irreversible deamidation of specific glutamine residues to glutamic acid. In Shewanella frigidimarina (strain NCIMB 400), this protein is Protein-glutamate methylesterase/protein-glutamine glutaminase.